We begin with the raw amino-acid sequence, 147 residues long: Pathogenesis-related protein PR-4B (147 aa).

A signal peptide spans 1–25; that stretch reads MERVNNYKLCVALLIMSVMMAMAAA. Positions 26–147 constitute a Barwin domain; the sequence is QSATNVRSTY…VNYEFVNCND (122 aa). Disulfide bonds link cysteine 54–cysteine 86, cysteine 75–cysteine 109, and cysteine 89–cysteine 145.

It is found in the secreted. It localises to the cell wall. The chain is Pathogenesis-related protein PR-4B from Nicotiana tabacum (Common tobacco).